A 455-amino-acid polypeptide reads, in one-letter code: Epoxide hydrolase 1 (455 aa).

The helical; Signal-anchor for type III membrane protein transmembrane segment at 1-21 (MLLELLLASVLGFVIYWFVSG) threads the bilayer. Topologically, residues 22–455 (DKEESLPLED…CKFVGLVERQ (434 aa)) are cytoplasmic. The active-site Nucleophile is Asp226. Arg295 carries the post-translational modification Dimethylated arginine. The active-site Proton donor is the Tyr374. Catalysis depends on His431, which acts as the Proton acceptor.

This sequence belongs to the peptidase S33 family.

It is found in the microsome membrane. The protein localises to the endoplasmic reticulum membrane. The enzyme catalyses cis-stilbene oxide + H2O = (1R,2R)-hydrobenzoin. It carries out the reaction 1-(4-methoxyphenyl)-N-methyl-N-[(3-methyloxetan-3-yl)methyl]methanamine + H2O = 2-{[(4-methoxybenzyl)(methyl)amino]methyl}-2-methylpropane-1,3-diol. It catalyses the reaction 8,9-epoxy-(5Z,11Z,14Z)-eicosatrienoate + H2O = 8,9-dihydroxy-(5Z,11Z,14Z)-eicosatrienoate. The catalysed reaction is 11,12-epoxy-(5Z,8Z,14Z)-eicosatrienoate + H2O = 11,12-dihydroxy-(5Z,8Z,14Z)-eicosatrienoate. The enzyme catalyses 2-(5Z,8Z,11Z,14Z-eicosatetraenoyl)-glycerol + H2O = glycerol + (5Z,8Z,11Z,14Z)-eicosatetraenoate + H(+). With respect to regulation, inhibited by 10-hydroxystearamide and methoxy-arachidonyl fluorophosphate. Biotransformation enzyme that catalyzes the hydrolysis of arene and aliphatic epoxides to less reactive and more water soluble dihydrodiols by the trans addition of water. May play a role in the metabolism of endogenous lipids such as epoxide-containing fatty acids. Metabolizes the abundant endocannabinoid 2-arachidonoylglycerol (2-AG) to free arachidonic acid (AA) and glycerol. Binds 20(S)-hydroxycholesterol (20(S)-OHC). This Oryctolagus cuniculus (Rabbit) protein is Epoxide hydrolase 1 (EPHX1).